Here is a 240-residue protein sequence, read N- to C-terminus: UDP-2,3-diacylglucosamine hydrolase (240 aa).

Mn(2+) contacts are provided by aspartate 8, histidine 10, aspartate 41, asparagine 79, and histidine 114. Asparagine 79–arginine 80 contributes to the substrate binding site. Substrate contacts are provided by aspartate 122, serine 160, asparagine 164, lysine 167, and histidine 195. 2 residues coordinate Mn(2+): histidine 195 and histidine 197.

The protein belongs to the LpxH family. It depends on Mn(2+) as a cofactor.

The protein resides in the cell inner membrane. It catalyses the reaction UDP-2-N,3-O-bis[(3R)-3-hydroxytetradecanoyl]-alpha-D-glucosamine + H2O = 2-N,3-O-bis[(3R)-3-hydroxytetradecanoyl]-alpha-D-glucosaminyl 1-phosphate + UMP + 2 H(+). Its pathway is glycolipid biosynthesis; lipid IV(A) biosynthesis; lipid IV(A) from (3R)-3-hydroxytetradecanoyl-[acyl-carrier-protein] and UDP-N-acetyl-alpha-D-glucosamine: step 4/6. Functionally, hydrolyzes the pyrophosphate bond of UDP-2,3-diacylglucosamine to yield 2,3-diacylglucosamine 1-phosphate (lipid X) and UMP by catalyzing the attack of water at the alpha-P atom. Involved in the biosynthesis of lipid A, a phosphorylated glycolipid that anchors the lipopolysaccharide to the outer membrane of the cell. The polypeptide is UDP-2,3-diacylglucosamine hydrolase (Salmonella paratyphi C (strain RKS4594)).